Reading from the N-terminus, the 77-residue chain is Fungal protease inhibitor F (77 aa).

Residues 1 to 22 (MASKNLFVLFFIFALFAANIAA) form the signal peptide. 4 cysteine pairs are disulfide-bonded: Cys25/Cys57, Cys36/Cys49, Cys40/Cys77, and Cys59/Cys71.

It belongs to the protease inhibitor I40 family. As to expression, hemolymph.

It localises to the secreted. Its function is as follows. Highly specific for fungal protease and subtilisin. In Bombyx mori (Silk moth), this protein is Fungal protease inhibitor F.